Consider the following 614-residue polypeptide: DBH-like monooxygenase protein 1 homolog (614 aa).

The signal sequence occupies residues 1-22 (MSENKLFCAIVFLTSLFCSTCS). Residues 23 to 593 (QGTRFVHSAA…CRKDSAIQCE (571 aa)) are Lumenal-facing. Residues 37-150 (RRYNIKWGFD…STVRVIWAFH (114 aa)) enclose the DOMON domain. The N-linked (GlcNAc...) asparagine glycan is linked to Asn-116. Residue Tyr-205 is part of the active site. Disulfide bonds link Cys-207-Cys-259 and Cys-244-Cys-271. Residues His-237 and His-238 each coordinate Cu cation. N-linked (GlcNAc...) asparagine glycosylation occurs at Asn-249. Cu cation is bound by residues His-309, His-391, and His-393. 3 disulfides stabilise this stretch: Cys-366/Cys-482, Cys-370/Cys-552, and Cys-445/Cys-467. The active site involves His-391. The N-linked (GlcNAc...) asparagine glycan is linked to Asn-454. Cu cation is bound at residue Met-466. N-linked (GlcNAc...) asparagine glycosylation occurs at Asn-519. A helical membrane pass occupies residues 594–612 (HSLALLLTACLLLILQTCL).

This sequence belongs to the copper type II ascorbate-dependent monooxygenase family. Cu(2+) is required as a cofactor.

It is found in the endoplasmic reticulum membrane. In Danio rerio (Zebrafish), this protein is DBH-like monooxygenase protein 1 homolog (moxd1).